Here is a 228-residue protein sequence, read N- to C-terminus: Phosphoglycolate phosphatase (228 aa).

The active-site Nucleophile is the D9. Mg(2+) contacts are provided by D9 and D11. Position 151 (K151) interacts with substrate. D174 and D178 together coordinate Mg(2+).

The protein belongs to the archaeal SPP-like hydrolase family. It depends on Mg(2+) as a cofactor.

The enzyme catalyses 2-phosphoglycolate + H2O = glycolate + phosphate. Catalyzes the dephosphorylation of 2-phosphoglycolate. The sequence is that of Phosphoglycolate phosphatase from Pyrobaculum islandicum (strain DSM 4184 / JCM 9189 / GEO3).